Reading from the N-terminus, the 658-residue chain is Integrator complex subunit 9 (658 aa).

K58 is covalently cross-linked (Glycyl lysine isopeptide (Lys-Gly) (interchain with G-Cter in SUMO2)). Positions 548 to 573 are disordered; sequence DNKHVLQPPPRPTQPTGGKKRKRASD. Residues 566-570 carry the Nuclear localization signal motif; it reads KKRKR.

The protein belongs to the metallo-beta-lactamase superfamily. RNA-metabolizing metallo-beta-lactamase-like family. INTS9 subfamily. In terms of assembly, component of the Integrator complex, composed of core subunits INTS1, INTS2, INTS3, INTS4, INTS5, INTS6, INTS7, INTS8, INTS9/RC74, INTS10, INTS11/CPSF3L, INTS12, INTS13, INTS14 and INTS15. The core complex associates with protein phosphatase 2A subunits PPP2CA and PPP2R1A, to form the Integrator-PP2A (INTAC) complex. INTS9 is part of the RNA endonuclease subcomplex, composed of INTS4, INTS9, INTS11 and inositol hexakisphosphate (InsP6). Interacts with WDR73; interaction is required for the assembly of the RNA endonuclease subcomplex in the cytoplasm. Interacts with BRAT1; interaction is required for the assembly of the RNA endonuclease subcomplex. Interacts with ESRRB, ESRRB is not a core component of the Integrator complex and this association is a bridge for the interaction with the multiprotein complex Integrator; attracts the transcriptional machinery.

Its subcellular location is the nucleus. The protein resides in the cytoplasm. Functionally, component of the integrator complex, a multiprotein complex that terminates RNA polymerase II (Pol II) transcription in the promoter-proximal region of genes. The integrator complex provides a quality checkpoint during transcription elongation by driving premature transcription termination of transcripts that are unfavorably configured for transcriptional elongation: the complex terminates transcription by (1) catalyzing dephosphorylation of the C-terminal domain (CTD) of Pol II subunit POLR2A/RPB1 and SUPT5H/SPT5, (2) degrading the exiting nascent RNA transcript via endonuclease activity and (3) promoting the release of Pol II from bound DNA. The integrator complex is also involved in terminating the synthesis of non-coding Pol II transcripts, such as enhancer RNAs (eRNAs), small nuclear RNAs (snRNAs), telomerase RNAs and long non-coding RNAs (lncRNAs). Mediates recruitment of cytoplasmic dynein to the nuclear envelope, probably as component of the integrator complex. This is Integrator complex subunit 9 (INTS9) from Bos taurus (Bovine).